The sequence spans 379 residues: ATP-sensitive inward rectifier potassium channel 10 (379 aa).

Residues 1 to 61 (MTSVAKVYYS…LKDLWTTFID (61 aa)) are Cytoplasmic-facing. A 1,2-dioctanoyl-sn-glycero-3-phospho-(1D-myo-inositol-4,5-bisphosphate)-binding site is contributed by R36. Residues 62–88 (MQWRYKLLLFSATFAGTWFLFGVVWYL) traverse the membrane as a helical segment. At 89-114 (VAVAHGDLLELGPPANHTPCVVQVHT) the chain is on the extracellular side. A disulfide bridge links C108 with C140. Positions 115-131 (LTGAFLFSLESQTTIGY) form an intramembrane region, discontinuously helical; Pore-forming. The short motif at 128 to 133 (TIGYGF) is the Selectivity filter element. Residues 132–140 (GFRYISEEC) lie on the Extracellular side of the membrane. The helical transmembrane segment at 141–166 (PLAIVLLIAQLVLTTILEIFITGTFL) threads the bilayer. Topologically, residues 167–379 (AKIARPKKRA…SALSVRISNV (213 aa)) are cytoplasmic. The 1,2-dioctanoyl-sn-glycero-3-phospho-(1D-myo-inositol-4,5-bisphosphate) site is built by K168, R171, and K173. ATP is bound at residue 210–217 (GCQVTGKL).

The protein belongs to the inward rectifier-type potassium channel (TC 1.A.2.1) family. KCNJ10 subfamily. In terms of assembly, homotetramer. In kidney cells, it forms heteromeric channels with Kir5.1/KCNJ16; this interaction is required for KCNJ16 localization to the basolateral membrane. Interacts with MAGI1, alone and possibly as a heteromer with KCNJ16; this interaction may facilitate KCNJ10/KCNJ16 potassium channel expression at the basolateral membrane in kidney cells. Interacts with PATJ. As to expression, predominantly expressed in the brain, including in glial cells of the cerebellum and forebrain. Expressed at lower levels in the kidney, and other peripheral tissues.

It localises to the membrane. It is found in the basolateral cell membrane. It catalyses the reaction K(+)(in) = K(+)(out). Its activity is regulated as follows. Channel activity is strongly regulated by variations of cytosolic pH; channels are activated by alkaline and inhibited by acidic pH values. Activated by phosphatidylinositol 4,5 biphosphate (PtdIns(4,5)P2). Inhibited by Ba(2+) and Cs(+). Functionally, may be responsible for potassium buffering action of glial cells in the brain. Inward rectifier potassium channels are characterized by a greater tendency to allow potassium to flow into the cell rather than out of it. Their voltage dependence is regulated by the concentration of extracellular potassium; as external potassium is raised, the voltage range of the channel opening shifts to more positive voltages. The inward rectification is mainly due to the blockage of outward current by internal magnesium. Can be blocked by extracellular barium and cesium. In the kidney, together with KCNJ16, mediates basolateral K(+) recycling in distal tubules; this process is critical for Na(+) reabsorption at the tubules. The polypeptide is ATP-sensitive inward rectifier potassium channel 10 (Rattus norvegicus (Rat)).